The sequence spans 479 residues: Phosphatidylinositol 4-kinase type 2-beta (479 aa).

The segment covering 1 to 10 has biased composition (acidic residues); sequence MESGSEEPDE. Residues 1–91 are disordered; it reads MESGSEEPDE…PRVGAGHTGH (91 aa). The span at 18-34 shows a compositional bias: low complexity; the sequence is PALHAGPPAGRAAPGGA. The segment covering 42 to 62 has biased composition (acidic residues); sequence GLEEEEEGEEDSGPEGDGEEE. The PI3K/PI4K catalytic domain occupies 118 to 449; that stretch reads GVLPERISQG…VQMPRVIVER (332 aa). The interval 124–130 is G-loop; the sequence is ISQGSSG. ATP is bound by residues Ser131 and Lys146. Positions 151–153 are important for substrate binding; it reads EPY. The interval 159–172 is important for interaction with membranes; the sequence is KWTKYFHKICCPCC. ATP-binding positions include 255–258 and 269–270; these read QLFV and RK. The segment at 262–270 is important for interaction with membranes; it reads KEADYWLRK. Positions 299-307 are catalytic loop; that stretch reads RNTDRGNDN. Residues 340–360 form an activation loop region; sequence AIDNGLAFPFKHPDEWRAYPF. Position 342 (Asp342) interacts with ATP. The tract at residues 355-364 is important for interaction with membranes; the sequence is WRAYPFHWAW.

This sequence belongs to the PI3/PI4-kinase family. Type II PI4K subfamily.

Its subcellular location is the cytoplasm. The protein localises to the cytosol. The protein resides in the golgi apparatus membrane. It is found in the endoplasmic reticulum membrane. It localises to the cell membrane. Its subcellular location is the early endosome membrane. The catalysed reaction is a 1,2-diacyl-sn-glycero-3-phospho-(1D-myo-inositol) + ATP = a 1,2-diacyl-sn-glycero-3-phospho-(1D-myo-inositol 4-phosphate) + ADP + H(+). In terms of biological role, contributes to the overall PI4-kinase activity of the cell. This contribution may be especially significant in plasma membrane, endosomal and Golgi compartments. The phosphorylation of phosphatidylinositol (PI) to PI4P is the first committed step in the generation of phosphatidylinositol 4,5-bisphosphate (PIP2), a precursor of the second messenger inositol 1,4,5-trisphosphate (InsP3). This Gallus gallus (Chicken) protein is Phosphatidylinositol 4-kinase type 2-beta (PI4K2B).